We begin with the raw amino-acid sequence, 350 residues long: N-acetyl-gamma-glutamyl-phosphate reductase (350 aa).

Residue cysteine 153 is part of the active site.

This sequence belongs to the NAGSA dehydrogenase family. Type 1 subfamily.

Its subcellular location is the cytoplasm. The enzyme catalyses N-acetyl-L-glutamate 5-semialdehyde + phosphate + NADP(+) = N-acetyl-L-glutamyl 5-phosphate + NADPH + H(+). The protein operates within amino-acid biosynthesis; L-arginine biosynthesis; N(2)-acetyl-L-ornithine from L-glutamate: step 3/4. Catalyzes the NADPH-dependent reduction of N-acetyl-5-glutamyl phosphate to yield N-acetyl-L-glutamate 5-semialdehyde. This is N-acetyl-gamma-glutamyl-phosphate reductase from Thermosynechococcus vestitus (strain NIES-2133 / IAM M-273 / BP-1).